Reading from the N-terminus, the 238-residue chain is Ubiquinone biosynthesis O-methyltransferase (238 aa).

Positions 38, 57, 78, and 124 each coordinate S-adenosyl-L-methionine.

Belongs to the methyltransferase superfamily. UbiG/COQ3 family.

It carries out the reaction a 3-demethylubiquinol + S-adenosyl-L-methionine = a ubiquinol + S-adenosyl-L-homocysteine + H(+). It catalyses the reaction a 3-(all-trans-polyprenyl)benzene-1,2-diol + S-adenosyl-L-methionine = a 2-methoxy-6-(all-trans-polyprenyl)phenol + S-adenosyl-L-homocysteine + H(+). It participates in cofactor biosynthesis; ubiquinone biosynthesis. Its function is as follows. O-methyltransferase that catalyzes the 2 O-methylation steps in the ubiquinone biosynthetic pathway. The polypeptide is Ubiquinone biosynthesis O-methyltransferase (Marinobacter nauticus (strain ATCC 700491 / DSM 11845 / VT8) (Marinobacter aquaeolei)).